Reading from the N-terminus, the 172-residue chain is Adenine phosphoribosyltransferase (172 aa).

Belongs to the purine/pyrimidine phosphoribosyltransferase family. In terms of assembly, homodimer.

The protein resides in the cytoplasm. The catalysed reaction is AMP + diphosphate = 5-phospho-alpha-D-ribose 1-diphosphate + adenine. It participates in purine metabolism; AMP biosynthesis via salvage pathway; AMP from adenine: step 1/1. Its function is as follows. Catalyzes a salvage reaction resulting in the formation of AMP, that is energically less costly than de novo synthesis. The sequence is that of Adenine phosphoribosyltransferase from Synechocystis sp. (strain ATCC 27184 / PCC 6803 / Kazusa).